The chain runs to 70 residues: Large ribosomal subunit protein uL29 (70 aa).

This sequence belongs to the universal ribosomal protein uL29 family.

The sequence is that of Large ribosomal subunit protein uL29 from Clostridium botulinum (strain Eklund 17B / Type B).